The following is a 61-amino-acid chain: Metallothionein-2 (61 aa).

M1 carries the post-translational modification N-acetylmethionine. A beta region spans residues 1–29 (MDPNCSCAAGGSCTCAGSCKCKECRCTSC). A divalent metal cation-binding residues include C5, C7, C13, C15, C19, C21, C24, C26, C29, C33, C34, C36, C37, C41, C44, C48, C50, and C57. Positions 30-61 (KKSCCSCCPVGCAKCAQGCICKGASDKCSCCA) are alpha. S58 carries the post-translational modification Phosphoserine. Residues C59 and C60 each contribute to the a divalent metal cation site.

Belongs to the metallothionein superfamily. Type 1 family. Interacts with EOLA1.

Its function is as follows. Metallothioneins have a high content of cysteine residues that bind various heavy metals; these proteins are transcriptionally regulated by both heavy metals and glucocorticoids. This Canis lupus familiaris (Dog) protein is Metallothionein-2 (MT2A).